The chain runs to 292 residues: Aspartate carbamoyltransferase catalytic subunit (292 aa).

Carbamoyl phosphate-binding residues include R50 and T51. K78 serves as a coordination point for L-aspartate. The carbamoyl phosphate site is built by R100, H128, and Q131. L-aspartate contacts are provided by R161 and R211. Residues G250 and P251 each coordinate carbamoyl phosphate.

It belongs to the aspartate/ornithine carbamoyltransferase superfamily. ATCase family. In terms of assembly, heterododecamer (2C3:3R2) of six catalytic PyrB chains organized as two trimers (C3), and six regulatory PyrI chains organized as three dimers (R2).

The catalysed reaction is carbamoyl phosphate + L-aspartate = N-carbamoyl-L-aspartate + phosphate + H(+). Its pathway is pyrimidine metabolism; UMP biosynthesis via de novo pathway; (S)-dihydroorotate from bicarbonate: step 2/3. In terms of biological role, catalyzes the condensation of carbamoyl phosphate and aspartate to form carbamoyl aspartate and inorganic phosphate, the committed step in the de novo pyrimidine nucleotide biosynthesis pathway. This chain is Aspartate carbamoyltransferase catalytic subunit, found in Nitratiruptor sp. (strain SB155-2).